A 130-amino-acid chain; its full sequence is Phosphoribosyl-AMP cyclohydrolase (130 aa).

Position 77 (Asp77) interacts with Mg(2+). Position 78 (Cys78) interacts with Zn(2+). Asp79 and Asp81 together coordinate Mg(2+). Residues Cys95 and Cys102 each contribute to the Zn(2+) site.

The protein belongs to the PRA-CH family. Homodimer. The cofactor is Mg(2+). Zn(2+) is required as a cofactor.

It localises to the cytoplasm. The catalysed reaction is 1-(5-phospho-beta-D-ribosyl)-5'-AMP + H2O = 1-(5-phospho-beta-D-ribosyl)-5-[(5-phospho-beta-D-ribosylamino)methylideneamino]imidazole-4-carboxamide. The protein operates within amino-acid biosynthesis; L-histidine biosynthesis; L-histidine from 5-phospho-alpha-D-ribose 1-diphosphate: step 3/9. Catalyzes the hydrolysis of the adenine ring of phosphoribosyl-AMP. In Pseudomonas putida (strain GB-1), this protein is Phosphoribosyl-AMP cyclohydrolase.